Reading from the N-terminus, the 328-residue chain is Tetraacyldisaccharide 4'-kinase (328 aa).

55-62 (TVGGNGKT) contributes to the ATP binding site.

Belongs to the LpxK family.

The catalysed reaction is a lipid A disaccharide + ATP = a lipid IVA + ADP + H(+). It functions in the pathway glycolipid biosynthesis; lipid IV(A) biosynthesis; lipid IV(A) from (3R)-3-hydroxytetradecanoyl-[acyl-carrier-protein] and UDP-N-acetyl-alpha-D-glucosamine: step 6/6. In terms of biological role, transfers the gamma-phosphate of ATP to the 4'-position of a tetraacyldisaccharide 1-phosphate intermediate (termed DS-1-P) to form tetraacyldisaccharide 1,4'-bis-phosphate (lipid IVA). The polypeptide is Tetraacyldisaccharide 4'-kinase (Hamiltonella defensa subsp. Acyrthosiphon pisum (strain 5AT)).